We begin with the raw amino-acid sequence, 254 residues long: tRNA (guanine-N(1)-)-methyltransferase (254 aa).

Residues glycine 115 and valine 135–leucine 140 contribute to the S-adenosyl-L-methionine site.

Belongs to the RNA methyltransferase TrmD family. Homodimer.

The protein localises to the cytoplasm. It catalyses the reaction guanosine(37) in tRNA + S-adenosyl-L-methionine = N(1)-methylguanosine(37) in tRNA + S-adenosyl-L-homocysteine + H(+). In terms of biological role, specifically methylates guanosine-37 in various tRNAs. In Francisella tularensis subsp. tularensis (strain FSC 198), this protein is tRNA (guanine-N(1)-)-methyltransferase.